We begin with the raw amino-acid sequence, 500 residues long: Lysine--tRNA ligase (500 aa).

Glutamate 411 and glutamate 418 together coordinate Mg(2+).

Belongs to the class-II aminoacyl-tRNA synthetase family. In terms of assembly, homodimer. It depends on Mg(2+) as a cofactor.

It is found in the cytoplasm. It catalyses the reaction tRNA(Lys) + L-lysine + ATP = L-lysyl-tRNA(Lys) + AMP + diphosphate. This chain is Lysine--tRNA ligase, found in Actinobacillus pleuropneumoniae serotype 7 (strain AP76).